The chain runs to 219 residues: Large ribosomal subunit protein uL3 (219 aa).

Residues phenylalanine 124–isoleucine 154 form a disordered region.

It belongs to the universal ribosomal protein uL3 family. As to quaternary structure, part of the 50S ribosomal subunit. Forms a cluster with proteins L14 and L19.

Its function is as follows. One of the primary rRNA binding proteins, it binds directly near the 3'-end of the 23S rRNA, where it nucleates assembly of the 50S subunit. This is Large ribosomal subunit protein uL3 from Phytoplasma mali (strain AT).